A 248-amino-acid chain; its full sequence is MSGLLVNKTAIVTGGSRGIGFSIAKLFAEQGANVQIWGINGEAGQAAAQTLSEQTGRQVSFALVDVSKNDMVSAQVQNFLAEYNTIDVIVNNAGITRDALLMRMSEEEWSSVINTNLGSIYNVCSAVIRPMIKARSGAIINISSIVGLRGSPGQTNYAAAKAGIIGFSKALSKEVGSKNIRVNCIAPGFIDTDMTKSLNDNLKNEWLKGVPLGRVGMPEEIAKAALFLASDGSSYITGQVLSVDGGMA.

NADP(+) contacts are provided by residues 14–17 (GGSR), 65–66 (DV), and Asn92. Ser144 serves as a coordination point for substrate. Tyr157 functions as the Proton acceptor in the catalytic mechanism. NADP(+) is bound by residues 157 to 161 (YAAAK) and Ile190.

Belongs to the short-chain dehydrogenases/reductases (SDR) family. In terms of assembly, homotetramer.

The enzyme catalyses a (3R)-hydroxyacyl-[ACP] + NADP(+) = a 3-oxoacyl-[ACP] + NADPH + H(+). It functions in the pathway lipid metabolism; fatty acid biosynthesis. Catalyzes the NADPH-dependent reduction of beta-ketoacyl-ACP substrates to beta-hydroxyacyl-ACP products, the first reductive step in the elongation cycle of fatty acid biosynthesis. The polypeptide is 3-oxoacyl-[acyl-carrier-protein] reductase FabG (fabG) (Chlamydia trachomatis serovar D (strain ATCC VR-885 / DSM 19411 / UW-3/Cx)).